The sequence spans 315 residues: ATP synthase gamma chain (315 aa).

Belongs to the ATPase gamma chain family. In terms of assembly, F-type ATPases have 2 components, CF(1) - the catalytic core - and CF(0) - the membrane proton channel. CF(1) has five subunits: alpha(3), beta(3), gamma(1), delta(1), epsilon(1). CF(0) has three main subunits: a, b and c.

It localises to the cellular thylakoid membrane. Produces ATP from ADP in the presence of a proton gradient across the membrane. The gamma chain is believed to be important in regulating ATPase activity and the flow of protons through the CF(0) complex. The sequence is that of ATP synthase gamma chain from Synechococcus sp. (strain PCC 6716).